Consider the following 616-residue polypeptide: Matrix metalloproteinase-21 (616 aa).

Positions M1–Q22 are cleaved as a signal peptide. The propeptide occupies E23–R192. The Cysteine switch motif lies at P139–N146. Zn(2+) is bound at residue C141. The segment at S157–S186 is disordered. Residues N161, N172, and N181 are each glycosylated (N-linked (GlcNAc...) asparagine). H329 is a binding site for Zn(2+). E330 is a catalytic residue. The Zn(2+) site is built by H333 and H339. C375 and C606 are oxidised to a cystine. Hemopexin repeat units lie at residues E376–I435, A437–I493, P494–V542, and F549–I605. N-linked (GlcNAc...) asparagine glycosylation is present at N418. N-linked (GlcNAc...) asparagine glycosylation is present at N597.

Belongs to the peptidase M10A family. Zn(2+) serves as cofactor. Requires Ca(2+) as cofactor. In terms of processing, the precursor is cleaved by a furin endopeptidase.

The protein localises to the secreted. May play a role in gastrulation-related cell movement. Plays a specialized role in the generation of left-right asymmetry during embryogenesis. May act as a negative regulator of the NOTCH-signaling pathway. The sequence is that of Matrix metalloproteinase-21 (MMP21) from Cynops pyrrhogaster (Japanese fire-bellied newt).